Here is a 131-residue protein sequence, read N- to C-terminus: Steroid Delta-isomerase (131 aa).

Tyr-16 acts as the Proton donor in catalysis. Asp-40 functions as the Proton acceptor in the catalytic mechanism. Asp-103 contributes to the substrate binding site.

As to quaternary structure, homodimer.

The catalysed reaction is a 3-oxo-Delta(5)-steroid = a 3-oxo-Delta(4)-steroid. The chain is Steroid Delta-isomerase (ksi) from Pseudomonas putida (Arthrobacter siderocapsulatus).